The sequence spans 250 residues: MGAPGLETRAGGPNGKSYLLLASVGAAVLGTLLLSVPITVLTVLALMPQEQGGQVADPSGPGGQLLQQLGFHKLPVESRSDLSPIPPAAHLIGIAKSSHGLRWVSGYEEAFLKSGTQFLGDEGLLALPQDGIYFLYCHIGYRGRAPSGGEQFRSQAGDPGVPVTLSSQLFRARGASGSGEPELLLQGFETVTPPVQHARGVGQGPLWYATVGFGGLVQLRGGEKIYVNVSHLELVDFRRGKTFFGAVMVG.

The Cytoplasmic segment spans residues 1-26 (MGAPGLETRAGGPNGKSYLLLASVGA). A helical; Signal-anchor for type II membrane protein membrane pass occupies residues 27–47 (AVLGTLLLSVPITVLTVLALM). The Extracellular portion of the chain corresponds to 48 to 250 (PQEQGGQVAD…KTFFGAVMVG (203 aa)). The 163-residue stretch at 87–249 (PAAHLIGIAK…GKTFFGAVMV (163 aa)) folds into the THD domain. N228 carries an N-linked (GlcNAc...) asparagine glycan.

Belongs to the tumor necrosis factor family. In terms of assembly, heterotrimer of either two LTB and one LTA subunits or (less prevalent) two LTA and one LTB subunits.

The protein resides in the membrane. Functionally, cytokine that binds to LTBR/TNFRSF3. May play a specific role in immune response regulation. Provides the membrane anchor for the attachment of the heterotrimeric complex to the cell surface. This is Lymphotoxin-beta (LTB) from Notamacropus eugenii (Tammar wallaby).